A 144-amino-acid polypeptide reads, in one-letter code: Transcription antitermination protein NusB (144 aa).

This sequence belongs to the NusB family.

Its function is as follows. Involved in transcription antitermination. Required for transcription of ribosomal RNA (rRNA) genes. Binds specifically to the boxA antiterminator sequence of the ribosomal RNA (rrn) operons. The protein is Transcription antitermination protein NusB of Carboxydothermus hydrogenoformans (strain ATCC BAA-161 / DSM 6008 / Z-2901).